The primary structure comprises 394 residues: GTPase Era, mitochondrial (394 aa).

Residues lysine 32 to glutamine 280 enclose the Era-type G domain. The segment at glycine 40 to serine 47 is G1. Glycine 40–serine 47 lines the GTP pocket. Residues aspartate 66–arginine 70 form a G2 region. Positions aspartate 87–glycine 90 are G3. Residues aspartate 87 to alanine 91 and asparagine 160 to aspartate 163 each bind GTP. The tract at residues asparagine 160–aspartate 163 is G4. The G5 stretch occupies residues valine 259–serine 261.

Belongs to the TRAFAC class TrmE-Era-EngA-EngB-Septin-like GTPase superfamily. Era GTPase family.

It localises to the mitochondrion matrix. Its subcellular location is the mitochondrion inner membrane. Functionally, probable GTPase that plays a role in the mitochondrial ribosomal small subunit assembly. Specifically binds the 12S mitochondrial rRNA (12S mt-rRNA) to a 33 nucleotide section delineating the 3' terminal stem-loop region. May act as a chaperone that protects the 12S mt-rRNA on the 28S mitoribosomal subunit during ribosomal small subunit assembly. May play a role in positively regulating mitochondrial function. Plays a role in fertility. This is GTPase Era, mitochondrial from Caenorhabditis elegans.